The sequence spans 236 residues: Peptidase E (236 aa).

Catalysis depends on charge relay system residues Ser-122, Asp-137, and His-159.

Belongs to the peptidase S51 family.

The protein localises to the cytoplasm. The enzyme catalyses Dipeptidase E catalyzes the hydrolysis of dipeptides Asp-|-Xaa. It does not act on peptides with N-terminal Glu, Asn or Gln, nor does it cleave isoaspartyl peptides.. Hydrolyzes dipeptides containing N-terminal aspartate residues. May play a role in allowing the cell to use peptide aspartate to spare carbon otherwise required for the synthesis of the aspartate family of amino acids. This chain is Peptidase E, found in Shewanella sp. (strain W3-18-1).